The primary structure comprises 370 residues: Dual-specificity RNA methyltransferase RlmN (370 aa).

Catalysis depends on Glu-97, which acts as the Proton acceptor. The Radical SAM core domain maps to 103–340 (EKSRGTLCIS…CTVRRTRGDD (238 aa)). A disulfide bond links Cys-110 and Cys-345. [4Fe-4S] cluster is bound by residues Cys-117, Cys-121, and Cys-124. S-adenosyl-L-methionine is bound by residues 170–171 (GE), Ser-202, 224–226 (SLH), and Asn-302. Residue Cys-345 is the S-methylcysteine intermediate of the active site.

This sequence belongs to the radical SAM superfamily. RlmN family. [4Fe-4S] cluster serves as cofactor.

The protein resides in the cytoplasm. The catalysed reaction is adenosine(2503) in 23S rRNA + 2 reduced [2Fe-2S]-[ferredoxin] + 2 S-adenosyl-L-methionine = 2-methyladenosine(2503) in 23S rRNA + 5'-deoxyadenosine + L-methionine + 2 oxidized [2Fe-2S]-[ferredoxin] + S-adenosyl-L-homocysteine. It catalyses the reaction adenosine(37) in tRNA + 2 reduced [2Fe-2S]-[ferredoxin] + 2 S-adenosyl-L-methionine = 2-methyladenosine(37) in tRNA + 5'-deoxyadenosine + L-methionine + 2 oxidized [2Fe-2S]-[ferredoxin] + S-adenosyl-L-homocysteine. Functionally, specifically methylates position 2 of adenine 2503 in 23S rRNA and position 2 of adenine 37 in tRNAs. m2A2503 modification seems to play a crucial role in the proofreading step occurring at the peptidyl transferase center and thus would serve to optimize ribosomal fidelity. This is Dual-specificity RNA methyltransferase RlmN from Hydrogenovibrio crunogenus (strain DSM 25203 / XCL-2) (Thiomicrospira crunogena).